The following is a 213-amino-acid chain: Thiopurine S-methyltransferase (213 aa).

S-adenosyl-L-methionine is bound by residues Trp10, Met45, Glu66, and Arg120.

It belongs to the class I-like SAM-binding methyltransferase superfamily. TPMT family.

Its subcellular location is the cytoplasm. The catalysed reaction is S-adenosyl-L-methionine + a thiopurine = S-adenosyl-L-homocysteine + a thiopurine S-methylether.. The sequence is that of Thiopurine S-methyltransferase from Photobacterium profundum (strain SS9).